The following is a 497-amino-acid chain: Lysine--tRNA ligase (497 aa).

Positions 406 and 413 each coordinate Mg(2+).

It belongs to the class-II aminoacyl-tRNA synthetase family. In terms of assembly, homodimer. The cofactor is Mg(2+).

It localises to the cytoplasm. It carries out the reaction tRNA(Lys) + L-lysine + ATP = L-lysyl-tRNA(Lys) + AMP + diphosphate. The protein is Lysine--tRNA ligase of Rhizobium leguminosarum bv. trifolii (strain WSM2304).